The primary structure comprises 429 residues: D-amino acid dehydrogenase (429 aa).

Position 3–17 (Val3–Tyr17) interacts with FAD.

The protein belongs to the DadA oxidoreductase family. FAD is required as a cofactor.

It carries out the reaction a D-alpha-amino acid + A + H2O = a 2-oxocarboxylate + AH2 + NH4(+). Its pathway is amino-acid degradation; D-alanine degradation; NH(3) and pyruvate from D-alanine: step 1/1. In terms of biological role, oxidative deamination of D-amino acids. This is D-amino acid dehydrogenase from Paraburkholderia xenovorans (strain LB400).